The primary structure comprises 330 residues: Diacylglycerol acyltransferase/mycolyltransferase Ag85B (330 aa).

A signal peptide spans 1–40; that stretch reads MTDLSEKVRAWGRRLLVGAAAAVTLPGLIGLAGGAATANA. Position 82–83 (82–83) interacts with substrate; sequence LR. Residues 98 to 108 form a fibronectin-binding region; the sequence is FEWYYQSGLSV. A disulfide bridge connects residues Cys-127 and Cys-132. Residues Ser-166 and Asp-194 each coordinate substrate. Ser-166 (nucleophile) is an active-site residue. The active site involves Glu-270. Substrate is bound by residues 272-275, Lys-279, and 302-304; these read FVRS and HSW. Residue His-302 is part of the active site.

Belongs to the mycobacterial A85 antigen family.

The protein resides in the secreted. The enzyme catalyses 2 alpha,alpha'-trehalose 6-mycolate = alpha,alpha'-trehalose 6,6'-bismycolate + alpha,alpha-trehalose. It carries out the reaction an acyl-CoA + a 1,2-diacyl-sn-glycerol = a triacyl-sn-glycerol + CoA. In terms of biological role, the antigen 85 proteins (FbpA, FbpB, FbpC) are responsible for the high affinity of mycobacteria for fibronectin, a large adhesive glycoprotein, which facilitates the attachment of M.tuberculosis to murine alveolar macrophages (AMs). They also help to maintain the integrity of the cell wall by catalyzing the transfer of mycolic acids to cell wall arabinogalactan and through the synthesis of alpha,alpha-trehalose dimycolate (TDM, cord factor). They catalyze the transfer of a mycoloyl residue from one molecule of alpha,alpha-trehalose monomycolate (TMM) to another TMM, leading to the formation of TDM. The chain is Diacylglycerol acyltransferase/mycolyltransferase Ag85B (fbpB) from Mycobacterium avium.